A 648-amino-acid polypeptide reads, in one-letter code: Threonine--tRNA ligase (648 aa).

One can recognise a TGS domain in the interval 1–61; it reads MIKITFPNTS…NENASVKLYK (61 aa). The interval 243 to 542 is catalytic; sequence DHRRIGKEME…MIEHTGGKFP (300 aa). Residues cysteine 338, histidine 389, and histidine 519 each contribute to the Zn(2+) site.

The protein belongs to the class-II aminoacyl-tRNA synthetase family. Homodimer. Requires Zn(2+) as cofactor.

Its subcellular location is the cytoplasm. The enzyme catalyses tRNA(Thr) + L-threonine + ATP = L-threonyl-tRNA(Thr) + AMP + diphosphate + H(+). In terms of biological role, catalyzes the attachment of threonine to tRNA(Thr) in a two-step reaction: L-threonine is first activated by ATP to form Thr-AMP and then transferred to the acceptor end of tRNA(Thr). Also edits incorrectly charged L-seryl-tRNA(Thr). This chain is Threonine--tRNA ligase, found in Azobacteroides pseudotrichonymphae genomovar. CFP2.